Reading from the N-terminus, the 327-residue chain is Interleukin-12 subunit beta (327 aa).

A signal peptide spans 1–22 (MHPQQLVVSWFSLVLLASPIVA). An Ig-like C2-type domain is found at 23–106 (IWELEKNVYI…LSRSLLLLHK (84 aa)). Residues Cys50 and Cys90 are joined by a disulfide bond. Asn223 is a glycosylation site (N-linked (GlcNAc...) asparagine). Residues 238–327 (PPKNLQLKPL…WSEWASVSCS (90 aa)) enclose the Fibronectin type-III domain.

The protein belongs to the IL-12B family. As to quaternary structure, heterodimer with IL12A; disulfide-linked. The heterodimer is known as interleukin IL-12. Heterodimer with IL23A; disulfide-linked. The heterodimer is known as interleukin IL-23. Also secreted as a monomer. Interacts with NBR1; this interaction promotes IL-12 secretion.

In terms of biological role, cytokine that can act as a growth factor for activated T and NK cells, enhance the lytic activity of NK/lymphokine-activated killer cells, and stimulate the production of IFN-gamma by resting PBMC. Its function is as follows. Associates with IL23A to form the IL-23 interleukin, a heterodimeric cytokine which functions in innate and adaptive immunity. IL-23 may constitute with IL-17 an acute response to infection in peripheral tissues. IL-23 binds to a heterodimeric receptor complex composed of IL12RB1 and IL23R, activates the Jak-Stat signaling cascade, stimulates memory rather than naive T-cells and promotes production of pro-inflammatory cytokines. IL-23 induces autoimmune inflammation and thus may be responsible for autoimmune inflammatory diseases and may be important for tumorigenesis. The chain is Interleukin-12 subunit beta (IL12B) from Bubalus bubalis (Domestic water buffalo).